Consider the following 341-residue polypeptide: Probable long-chain-alcohol O-fatty-acyltransferase 9 (341 aa).

The next 7 membrane-spanning stretches (helical) occupy residues 9–29 (IIVW…SANI), 36–56 (LFSV…FSSV), 82–102 (GPLF…CFPI), 122–142 (FAIK…SHFL), 146–166 (VLLS…LGPL), 231–251 (MGYL…YFYI), and 295–315 (RLLT…PLFI).

The protein belongs to the wax synthase family.

It is found in the membrane. It carries out the reaction a long chain fatty alcohol + a fatty acyl-CoA = a wax ester + CoA. In terms of biological role, catalyzes the final step in the synthesis of long-chain linear esters (waxes). The polypeptide is Probable long-chain-alcohol O-fatty-acyltransferase 9 (Arabidopsis thaliana (Mouse-ear cress)).